We begin with the raw amino-acid sequence, 414 residues long: Succinylornithine transaminase (414 aa).

Lys260 bears the N6-(pyridoxal phosphate)lysine mark.

This sequence belongs to the class-III pyridoxal-phosphate-dependent aminotransferase family. AstC subfamily. The cofactor is pyridoxal 5'-phosphate.

The catalysed reaction is N(2)-succinyl-L-ornithine + 2-oxoglutarate = N-succinyl-L-glutamate 5-semialdehyde + L-glutamate. Its pathway is amino-acid degradation; L-arginine degradation via AST pathway; L-glutamate and succinate from L-arginine: step 3/5. Catalyzes the transamination of N(2)-succinylornithine and alpha-ketoglutarate into N(2)-succinylglutamate semialdehyde and glutamate. Can also act as an acetylornithine aminotransferase. This is Succinylornithine transaminase from Yersinia enterocolitica serotype O:8 / biotype 1B (strain NCTC 13174 / 8081).